Here is an 893-residue protein sequence, read N- to C-terminus: Protein translocase subunit SecA (893 aa).

Residues Q87, 105-109 (GEGKT), and D512 contribute to the ATP site. Over residues 840-849 (VEEQHRKSEE) the composition is skewed to basic and acidic residues. The disordered stretch occupies residues 840–893 (VEEQHRKSEEVPMDFQHQSASSPSEQAQTPRVGRNEPCPCGSGKKYKQCHGKLA). Polar residues predominate over residues 855-868 (QHQSASSPSEQAQT). The Zn(2+) site is built by C877, C879, C888, and H889. A compositionally biased stretch (basic residues) spans 883 to 893 (KKYKQCHGKLA).

Belongs to the SecA family. As to quaternary structure, monomer and homodimer. Part of the essential Sec protein translocation apparatus which comprises SecA, SecYEG and auxiliary proteins SecDF-YajC and YidC. Zn(2+) serves as cofactor.

The protein localises to the cell inner membrane. Its subcellular location is the cytoplasm. It catalyses the reaction ATP + H2O + cellular proteinSide 1 = ADP + phosphate + cellular proteinSide 2.. In terms of biological role, part of the Sec protein translocase complex. Interacts with the SecYEG preprotein conducting channel. Has a central role in coupling the hydrolysis of ATP to the transfer of proteins into and across the cell membrane, serving both as a receptor for the preprotein-SecB complex and as an ATP-driven molecular motor driving the stepwise translocation of polypeptide chains across the membrane. The protein is Protein translocase subunit SecA of Colwellia psychrerythraea (strain 34H / ATCC BAA-681) (Vibrio psychroerythus).